The following is a 37-amino-acid chain: Cytochrome b6-f complex subunit 5 (37 aa).

A helical transmembrane segment spans residues 5–25; it reads FLFGIVLGLIPVTLAGLFVTA.

Belongs to the PetG family. In terms of assembly, the 4 large subunits of the cytochrome b6-f complex are cytochrome b6, subunit IV (17 kDa polypeptide, PetD), cytochrome f and the Rieske protein, while the 4 small subunits are PetG, PetL, PetM and PetN. The complex functions as a dimer.

It localises to the plastid. It is found in the chloroplast thylakoid membrane. In terms of biological role, component of the cytochrome b6-f complex, which mediates electron transfer between photosystem II (PSII) and photosystem I (PSI), cyclic electron flow around PSI, and state transitions. PetG is required for either the stability or assembly of the cytochrome b6-f complex. The sequence is that of Cytochrome b6-f complex subunit 5 from Daucus carota (Wild carrot).